The following is a 239-amino-acid chain: Carboxy-S-adenosyl-L-methionine synthase (239 aa).

S-adenosyl-L-methionine-binding positions include Y35, 64 to 66 (GCS), 88 to 89 (DN), and R195.

This sequence belongs to the class I-like SAM-binding methyltransferase superfamily. Cx-SAM synthase family. Homodimer.

It catalyses the reaction prephenate + S-adenosyl-L-methionine = carboxy-S-adenosyl-L-methionine + 3-phenylpyruvate + H2O. Its function is as follows. Catalyzes the conversion of S-adenosyl-L-methionine (SAM) to carboxy-S-adenosyl-L-methionine (Cx-SAM). This is Carboxy-S-adenosyl-L-methionine synthase from Helicobacter pylori (strain Shi470).